We begin with the raw amino-acid sequence, 262 residues long: Probable dihydroorotate dehydrogenase B (NAD(+)), electron transfer subunit (262 aa).

The 94-residue stretch at 4 to 97 folds into the FAD-binding FR-type domain; that stretch reads VKPIPAEVVE…RGPYGKPFEV (94 aa). Residues Cys217, Cys222, Cys225, and Cys234 each contribute to the [2Fe-2S] cluster site.

This sequence belongs to the PyrK family. In terms of assembly, heterotetramer of 2 PyrK and 2 PyrD type B subunits. The cofactor is [2Fe-2S] cluster. It depends on FAD as a cofactor.

It functions in the pathway pyrimidine metabolism; UMP biosynthesis via de novo pathway; orotate from (S)-dihydroorotate (NAD(+) route): step 1/1. Functionally, responsible for channeling the electrons from the oxidation of dihydroorotate from the FMN redox center in the PyrD type B subunit to the ultimate electron acceptor NAD(+). The chain is Probable dihydroorotate dehydrogenase B (NAD(+)), electron transfer subunit from Methanopyrus kandleri (strain AV19 / DSM 6324 / JCM 9639 / NBRC 100938).